The primary structure comprises 436 residues: Enolase (436 aa).

Q167 serves as a coordination point for (2R)-2-phosphoglycerate. E209 serves as the catalytic Proton donor. Mg(2+)-binding residues include D246, E291, and D318. (2R)-2-phosphoglycerate is bound by residues K343, R372, S373, and K394. K343 functions as the Proton acceptor in the catalytic mechanism.

This sequence belongs to the enolase family. In terms of assembly, component of the RNA degradosome, a multiprotein complex involved in RNA processing and mRNA degradation. Mg(2+) is required as a cofactor.

The protein localises to the cytoplasm. It localises to the secreted. It is found in the cell surface. The catalysed reaction is (2R)-2-phosphoglycerate = phosphoenolpyruvate + H2O. Its pathway is carbohydrate degradation; glycolysis; pyruvate from D-glyceraldehyde 3-phosphate: step 4/5. Catalyzes the reversible conversion of 2-phosphoglycerate (2-PG) into phosphoenolpyruvate (PEP). It is essential for the degradation of carbohydrates via glycolysis. The chain is Enolase from Actinobacillus pleuropneumoniae serotype 3 (strain JL03).